We begin with the raw amino-acid sequence, 335 residues long: UPF0353 protein MT1528 (335 aa).

2 helical membrane-spanning segments follow: residues 18–38 (WFFL…LMQL) and 67–87 (VPAI…AGPT). The 197-residue stretch at 98 to 294 (VVMLVIDVSQ…AELRAVYSSL (197 aa)) folds into the VWFA domain. A helical transmembrane segment spans residues 309-329 (VGWLRLGALALALAALAALLI).

This sequence belongs to the UPF0353 family.

The protein localises to the cell membrane. This Mycobacterium tuberculosis (strain CDC 1551 / Oshkosh) protein is UPF0353 protein MT1528.